Reading from the N-terminus, the 454-residue chain is Aquaglyceroporin-9 (454 aa).

At methionine 1 to glutamate 186 the chain is on the cytoplasmic side. The helical transmembrane segment at phenylalanine 187 to serine 207 threads the bilayer. Residues serine 208–serine 216 are Extracellular-facing. Residues isoleucine 217 to alanine 237 traverse the membrane as a helical segment. The Cytoplasmic segment spans residues histidine 238 to lysine 257. Positions asparagine 240–alanine 242 match the NPA 1 motif. A helical transmembrane segment spans residues phenylalanine 258–alanine 278. At asparagine 279–lysine 316 the chain is on the extracellular side. The N-linked (GlcNAc...) asparagine glycan is linked to asparagine 299. A helical membrane pass occupies residues threonine 317–leucine 337. At glutamine 338–leucine 351 the chain is on the cytoplasmic side. Residues glycine 352–isoleucine 372 form a helical membrane-spanning segment. Positions asparagine 373–alanine 375 match the NPA 2 motif. Topologically, residues asparagine 373–valine 403 are extracellular. A helical transmembrane segment spans residues proline 404–phenylalanine 424. The Cytoplasmic segment spans residues threonine 425–valine 454.

Belongs to the MIP/aquaporin (TC 1.A.8) family.

The protein resides in the membrane. It catalyses the reaction H2O(in) = H2O(out). The catalysed reaction is glycerol(in) = glycerol(out). Water channel required to facilitate the transport of water across membranes. May play a role in the vegetative growth and pathogenicity. This is Aquaglyceroporin-9 from Botryotinia fuckeliana (strain B05.10) (Noble rot fungus).